The sequence spans 271 residues: Thiazole synthase (271 aa).

The active-site Schiff-base intermediate with DXP is the lysine 95. Residues glycine 156, 182-183 (AG), and 204-205 (NT) contribute to the 1-deoxy-D-xylulose 5-phosphate site.

The protein belongs to the ThiG family. Homotetramer. Forms heterodimers with either ThiH or ThiS.

Its subcellular location is the cytoplasm. It carries out the reaction [ThiS sulfur-carrier protein]-C-terminal-Gly-aminoethanethioate + 2-iminoacetate + 1-deoxy-D-xylulose 5-phosphate = [ThiS sulfur-carrier protein]-C-terminal Gly-Gly + 2-[(2R,5Z)-2-carboxy-4-methylthiazol-5(2H)-ylidene]ethyl phosphate + 2 H2O + H(+). Its pathway is cofactor biosynthesis; thiamine diphosphate biosynthesis. Functionally, catalyzes the rearrangement of 1-deoxy-D-xylulose 5-phosphate (DXP) to produce the thiazole phosphate moiety of thiamine. Sulfur is provided by the thiocarboxylate moiety of the carrier protein ThiS. In vitro, sulfur can be provided by H(2)S. This chain is Thiazole synthase, found in Yersinia pseudotuberculosis serotype O:1b (strain IP 31758).